We begin with the raw amino-acid sequence, 138 residues long: Putative pre-16S rRNA nuclease (138 aa).

The protein belongs to the YqgF nuclease family.

The protein resides in the cytoplasm. Functionally, could be a nuclease involved in processing of the 5'-end of pre-16S rRNA. The chain is Putative pre-16S rRNA nuclease from Bacteroides thetaiotaomicron (strain ATCC 29148 / DSM 2079 / JCM 5827 / CCUG 10774 / NCTC 10582 / VPI-5482 / E50).